The following is a 403-amino-acid chain: Phosphoglycerate kinase (403 aa).

Residues 24–26, Arg-39, 62–65, Arg-121, and Arg-161 each bind substrate; these read DLN and HLGR. ATP contacts are provided by residues Lys-211, Gly-299, Glu-330, and 359–362; that span reads GGDS.

The protein belongs to the phosphoglycerate kinase family. Monomer.

It localises to the cytoplasm. It catalyses the reaction (2R)-3-phosphoglycerate + ATP = (2R)-3-phospho-glyceroyl phosphate + ADP. Its pathway is carbohydrate degradation; glycolysis; pyruvate from D-glyceraldehyde 3-phosphate: step 2/5. This chain is Phosphoglycerate kinase, found in Rhodococcus opacus (strain B4).